The following is a 1038-amino-acid chain: Ubiquitin carboxyl-terminal hydrolase 36 (1038 aa).

2 disordered regions span residues 22–44 and 107–148; these read LGGNSSAGSSTDQAKSGEDTNGS and ANGH…PKPK. Residues 23-44 are compositionally biased toward polar residues; sequence GGNSSAGSSTDQAKSGEDTNGS. Residues 172 to 480 form the USP domain; it reads TGMINVGNTC…NAYIMFFELD (309 aa). Cys181 (nucleophile) is an active-site residue. His439 (proton acceptor) is an active-site residue. 4 disordered regions span residues 487–794, 818–881, 912–985, and 1000–1038; these read PAAN…SKTG, GSPV…SNGS, LLVD…YNQN, and RFGGPGSAKFQQQRALQRHLSAGGGFSRRQPSAQQQQQT. 3 stretches are compositionally biased toward low complexity: residues 502–517, 546–559, and 587–606; these read STTPVPAATVSSPSPT, QQNQQSPQNGLQLG, and NGNKSSSPSSNSSSNHKSIN. Phosphoserine occurs at positions 513 and 515. A compositionally biased stretch (polar residues) spans 629 to 641; the sequence is TTAQLPSMPNMTE. Thr658 and Thr662 each carry phosphothreonine. A phosphoserine mark is found at Ser672 and Ser674. A compositionally biased stretch (polar residues) spans 703 to 728; the sequence is TNGHSKTNGSHTNGSASSSVHVNNSK. The span at 729-746 shows a compositional bias: basic and acidic residues; sequence QKTDAIDEIFKSLKKSAD. A Phosphoserine modification is found at Ser747. The span at 747–756 shows a compositional bias: acidic residues; sequence SDEDDDEEEP. The span at 766–776 shows a compositional bias: low complexity; sequence PQKQSQSQSKA. The segment covering 777-786 has biased composition (pro residues); the sequence is PPSPKTPPSP. Ser779 carries the phosphoserine modification. Thr782 is subject to Phosphothreonine. 2 positions are modified to phosphoserine: Ser785 and Ser819. Thr825 is modified (phosphothreonine). Over residues 832–844 the composition is skewed to polar residues; the sequence is NPFSSSKPSTDSP. Residue Ser843 is modified to Phosphoserine. Thr846 bears the Phosphothreonine mark. The segment covering 859–881 has biased composition (polar residues); the sequence is ALKSHQQPRVGNGYQSNATSNGS. The span at 912 to 923 shows a compositional bias: basic and acidic residues; it reads LLVDAREQRQRD. Positions 942-953 are enriched in low complexity; the sequence is SGSAKGNNASNS.

This sequence belongs to the peptidase C19 family. Interacts with atms/PAF1, but not with CycT. Interacts (via C-terminus) with imd (via N-terminus).

It is found in the nucleus. Its subcellular location is the nucleolus. The protein localises to the cytoplasm. The catalysed reaction is Thiol-dependent hydrolysis of ester, thioester, amide, peptide and isopeptide bonds formed by the C-terminal Gly of ubiquitin (a 76-residue protein attached to proteins as an intracellular targeting signal).. Functionally, hydrolase that deubiquitinates polyubiquitinated target proteins including imd. Required for preventing the constitutive activation of the imd/NF-kappa-B (Imd) signaling cascade under unchalleneged conditions. Deubiquitinates imd linked 'Lys-63' chains which leads its proteasomal degradation and consequently down-regulation of the Imd signaling cascade. Removal of the activating 'Lys-63'-linked chains is likely to enable their replacement with 'Lys-48'-linked chains which act as 'tags' the for proteasomal degradation of imd. Required for maintaining multiple types of adult stem cells, including male and female germline, epithelial follicle cell and intestinal stem cells. May function as a transcriptional repressor by continually deubiquiting histone H2B at the promoters of genes critical for cellular differentiation, thereby preventing histone H3 'Lys-4' trimethylation (H3K4me3). Controls selective autophagy activation by ubiquitinated proteins. This chain is Ubiquitin carboxyl-terminal hydrolase 36 (scny), found in Drosophila melanogaster (Fruit fly).